The sequence spans 108 residues: ATP synthase peripheral stalk subunit F6, mitochondrial (108 aa).

A mitochondrion-targeting transit peptide spans 1 to 32; that stretch reads MVLQRIFRLSSVLRSAVSVHLKRNIGVTAVAF. Lys-41, Lys-46, and Lys-79 each carry N6-acetyllysine. N6-acetyllysine; alternate is present on residues Lys-84, Lys-94, and Lys-99. 3 positions are modified to N6-succinyllysine; alternate: Lys-84, Lys-94, and Lys-99. Lys-105 bears the N6-acetyllysine mark. The residue at position 108 (Ser-108) is a Phosphoserine.

This sequence belongs to the eukaryotic ATPase subunit F6 family. As to quaternary structure, component of the ATP synthase complex composed at least of ATP5F1A/subunit alpha, ATP5F1B/subunit beta, ATP5MC1/subunit c (homooctomer), MT-ATP6/subunit a, MT-ATP8/subunit 8, ATP5ME/subunit e, ATP5MF/subunit f, ATP5MG/subunit g, ATP5MK/subunit k, ATP5MJ/subunit j, ATP5F1C/subunit gamma, ATP5F1D/subunit delta, ATP5F1E/subunit epsilon, ATP5PF/subunit F6, ATP5PB/subunit b, ATP5PD/subunit d, ATP5PO/subunit OSCP. ATP synthase complex consists of a soluble F(1) head domain (subunits alpha(3) and beta(3)) - the catalytic core - and a membrane F(0) domain - the membrane proton channel (subunits c, a, 8, e, f, g, k and j). These two domains are linked by a central stalk (subunits gamma, delta, and epsilon) rotating inside the F1 region and a stationary peripheral stalk (subunits F6, b, d, and OSCP).

The protein localises to the mitochondrion. Its subcellular location is the mitochondrion inner membrane. Its function is as follows. Subunit F6, of the mitochondrial membrane ATP synthase complex (F(1)F(0) ATP synthase or Complex V) that produces ATP from ADP in the presence of a proton gradient across the membrane which is generated by electron transport complexes of the respiratory chain. ATP synthase complex consist of a soluble F(1) head domain - the catalytic core - and a membrane F(1) domain - the membrane proton channel. These two domains are linked by a central stalk rotating inside the F(1) region and a stationary peripheral stalk. During catalysis, ATP synthesis in the catalytic domain of F(1) is coupled via a rotary mechanism of the central stalk subunits to proton translocation. In vivo, can only synthesize ATP although its ATP hydrolase activity can be activated artificially in vitro. Part of the complex F(0) domain. Part of the complex F(0) domain and the peripheric stalk, which acts as a stator to hold the catalytic alpha(3)beta(3) subcomplex and subunit a/ATP6 static relative to the rotary elements. The sequence is that of ATP synthase peripheral stalk subunit F6, mitochondrial from Mus musculus (Mouse).